The following is a 269-amino-acid chain: Proline-rich protein 7 (269 aa).

Over 1-9 (MVMSQGTYT) the chain is Extracellular. Residues 1-44 (MVMSQGTYTFLTCFAGFWLIWGLIVLLCCFCSFLRRRLKRRQEE) form a required for interaction with NMDA receptors region. A required for membrane localization region spans residues 2-39 (VMSQGTYTFLTCFAGFWLIWGLIVLLCCFCSFLRRRLK). The chain crosses the membrane as a helical; Signal-anchor for type III membrane protein span at residues 10-30 (FLTCFAGFWLIWGLIVLLCCF). Residues 31 to 269 (CSFLRRRLKR…IPLFGRTTAV (239 aa)) lie on the Cytoplasmic side of the membrane. Disordered regions lie at residues 63 to 83 (GSLA…RSRL) and 97 to 121 (PLLH…PHPP). Phosphoserine is present on serine 64. The segment covering 108–117 (AHPHPHHHAL) has biased composition (basic residues). The tract at residues 146-166 (PCYEEAVLMAEPPPPYSEVLT) is required for internalization. Residues 146-269 (PCYEEAVLMA…IPLFGRTTAV (124 aa)) are required for apoptosis induction. The PDZ-binding motif lies at 267-269 (TAV).

Forms a complex with NMDA receptor zeta subunit GRIN1 and epsilon subunit GRIN2B. Interacts with GRIN2B. Interacts with GRIN1; the interaction is reduced upon NMDA receptor activity. Found in a postsynaptic membrane complex with DLG4 and GRIN1. Interacts with DLG4 (via PDZ3 domain and to lesser degree via PDZ2 domain). Interacts with JUN. Found in a complex with JUN and FBXW7. Interacts with JUN and FBXW7; the interaction inhibits ubiquitination-mediated JUN degradation promoting its phosphorylation and transcriptional activity. Interacts with SRC. In terms of processing, palmitoylated. Post-translationally, tyrosine phosphorylated, possibly by SRC. In terms of tissue distribution, highly expressed in brain, moderately expressed in lymph nodes and T cells and low expression in thymus and spleen. Expressed in single positive progenitor thymocytes, particularly in CD8 single positive thymocytes.

The protein resides in the cell membrane. It localises to the postsynaptic cell membrane. Its subcellular location is the postsynaptic density membrane. The protein localises to the cytoplasm. It is found in the perinuclear region. The protein resides in the synapse. It localises to the cell projection. Its subcellular location is the dendrite. The protein localises to the nucleus. Acts as a synapse-to-nucleus messenger to promote NMDA receptor-mediated excitotoxicity in neurons in a JUN-dependent manner. Inhibits ubiquitination-mediated degradation and promotes phosphorylation and transcriptional activity of transcription factor JUN. Might play a redundant role in the regulation of T cell receptor signaling. Might promote apoptosis in T cells. The protein is Proline-rich protein 7 (Prr7) of Mus musculus (Mouse).